The chain runs to 2002 residues: Methylcytosine dioxygenase TET2 (2002 aa).

Over residues 1-11 (MEQDRTNHVEG) the composition is skewed to basic and acidic residues. The segment at 1 to 22 (MEQDRTNHVEGNRLSPFLIPSP) is disordered. Ser-15, Ser-75, and Ser-99 each carry phosphoserine. Basic and acidic residues predominate over residues 113 to 124 (KQDQKANGERRN). Disordered regions lie at residues 113-154 (KQDQ…VSSV), 266-287 (HPSH…LPPK), 349-368 (GEEF…GSSE), 390-488 (DSFS…VNRN), 703-748 (LNQQ…QQKL), 930-949 (VPDQ…TQKH), and 1075-1095 (DSHT…PTKR). Composition is skewed to polar residues over residues 126–143 (GVSQ…NVSD) and 267–283 (PSHT…SNSE). Over residues 397 to 416 (TPPPPSQLLLSPPPPLPQVP) the composition is skewed to pro residues. Polar residues-rich tracts occupy residues 479-488 (RPQNNCVNRN) and 703-718 (LNQQ…NSHL). Positions 731–748 (QPSQSSHLPQNQQQQQKL) are enriched in low complexity. 2 stretches are compositionally biased toward polar residues: residues 935-944 (GSHTQTPPQK) and 1081-1095 (LEQQ…PTKR). Phosphoserine is present on residues Ser-1107 and Ser-1109. Zn(2+) is bound by residues Cys-1133, Cys-1135, Cys-1193, His-1219, and Cys-1221. Position 1261 (Arg-1261) interacts with 2-oxoglutarate. Zn(2+)-binding residues include Cys-1271, Cys-1273, Cys-1289, and Cys-1298. The tract at residues 1290-1303 (SWSMYYNGCKFARS) is interaction with DNA. Residue Lys-1299 forms a Glycyl lysine isopeptide (Lys-Gly) (interchain with G-Cter in ubiquitin) linkage. Cys-1358 serves as a coordination point for Zn(2+). Cys-1374 lines the 2-oxoglutarate pocket. His-1380 serves as a coordination point for Zn(2+). Residues His-1382 and Asp-1384 each contribute to the Fe cation site. Asn-1387 serves as a coordination point for substrate. His-1416 contributes to the 2-oxoglutarate binding site. Disordered regions lie at residues 1475–1507 (AAEK…NASQ) and 1521–1587 (VMQQ…HTSD). Residues 1477–1487 (EKLSSLENSSN) are compositionally biased toward low complexity. A compositionally biased stretch (polar residues) spans 1496-1507 (PSRTKQTENASQ). 2 stretches are compositionally biased toward low complexity: residues 1523–1532 (QQSQQPQPLQ) and 1539–1551 (QQQQ…QPHH). Polar residues predominate over residues 1554–1568 (TESVNSYSASGSTNP). Arg-1682 is subject to Asymmetric dimethylarginine. His-1881 serves as a coordination point for Fe cation. 2-oxoglutarate is bound at residue 1896–1898 (RIS). 1902 to 1904 (YQH) is a binding site for substrate. A Zn(2+)-binding site is contributed by His-1912. Positions 1932-1961 (CEKYGPDYVPQKSHGKKVKREPAEPHETSE) are disordered. Basic and acidic residues predominate over residues 1951–1960 (REPAEPHETS).

Belongs to the TET family. In terms of assembly, interacts with HCFC1. Interacts with OGT. Interacts with PROSER1; this interaction mediates TET2 O-GlcNAcylation and stability by promoting the interaction between OGT and TET2. Directly interacts (via C-terminus) with the DCAF1 component of the CRL4(VprBP) E3 ubiquitin-protein ligase complex. Requires Fe(2+) as cofactor. The cofactor is Zn(2+). May be glycosylated. It is unclear whether interaction with OGT leads to GlcNAcylation. According to a report, it is not GlcNAcylated by OGT. In contrast, another group reports GlcNAcylation by OGT in mouse ortholog. In terms of processing, monoubiquitinated at Lys-1299 by the DCX (DDB1-CUL4-X-box) E3 ubiquitin-protein ligase complex called CRL4(VprBP) or CUL4A-RBX1-DDB1-DCAF1/VPRBP complex; this modification promotes binding to DNA. Post-translationally, acetylated. Deacetylase HDAC6 acts as a valine sensor by binding to valine through its primate-specific SE14 repeat region and deacetylates TET2 following valine deprivation which promotes TET2-dependent DNA demethylation. In terms of tissue distribution, broadly expressed. Highly expressed in hematopoietic cells; highest expression observed in granulocytes. Expression is reduced in granulocytes from peripheral blood of patients affected by myelodysplastic syndromes.

The protein resides in the nucleus. The protein localises to the chromosome. It catalyses the reaction a 5-methyl-2'-deoxycytidine in DNA + 2-oxoglutarate + O2 = a 5-hydroxymethyl-2'-deoxycytidine in DNA + succinate + CO2. The enzyme catalyses a 5-hydroxymethyl-2'-deoxycytidine in DNA + 2-oxoglutarate + O2 = a 5-formyl-2'-deoxycytidine in DNA + succinate + CO2 + H2O. It carries out the reaction a 5-formyl-2'-deoxycytidine in DNA + 2-oxoglutarate + O2 = a 5-carboxyl-2'-deoxycytidine in DNA + succinate + CO2 + H(+). Dioxygenase that catalyzes the conversion of the modified genomic base 5-methylcytosine (5mC) into 5-hydroxymethylcytosine (5hmC) and plays a key role in active DNA demethylation. Has a preference for 5-hydroxymethylcytosine in CpG motifs. Also mediates subsequent conversion of 5hmC into 5-formylcytosine (5fC), and conversion of 5fC to 5-carboxylcytosine (5caC). Conversion of 5mC into 5hmC, 5fC and 5caC probably constitutes the first step in cytosine demethylation. Methylation at the C5 position of cytosine bases is an epigenetic modification of the mammalian genome which plays an important role in transcriptional regulation. In addition to its role in DNA demethylation, also involved in the recruitment of the O-GlcNAc transferase OGT to CpG-rich transcription start sites of active genes, thereby promoting histone H2B GlcNAcylation by OGT. The sequence is that of Methylcytosine dioxygenase TET2 (TET2) from Homo sapiens (Human).